An 81-amino-acid polypeptide reads, in one-letter code: Short neurotoxin SN160 (81 aa).

The signal sequence occupies residues 1–21; the sequence is MKTLLLTLVVVTIVCLDLGYT. 4 disulfides stabilise this stretch: cysteine 24-cysteine 43, cysteine 38-cysteine 60, cysteine 62-cysteine 73, and cysteine 74-cysteine 79.

Belongs to the three-finger toxin family. Short-chain subfamily. Type I alpha-neurotoxin sub-subfamily. Expressed by the venom gland.

It localises to the secreted. Functionally, binds to muscle nicotinic acetylcholine receptor (nAChR) and inhibit acetylcholine from binding to the receptor, thereby impairing neuromuscular transmission. The chain is Short neurotoxin SN160 from Hydrophis hardwickii (Hardwick's spine-bellied seasnake).